The following is a 229-amino-acid chain: Putative germin-like protein 3-4 (229 aa).

An N-terminal signal peptide occupies residues 1 to 31 (MEHSFKTITAGVVFVVLLLQQAPVLIRATDA). Cysteines 38 and 53 form a disulfide. In terms of domain architecture, Cupin type-1 spans 67–219 (SKIATGGDVN…ALRVDTGVVE (153 aa)). N-linked (GlcNAc...) asparagine glycans are attached at residues Asn80 and Asn83. Mn(2+)-binding residues include His116, His118, Glu123, and His165.

Belongs to the germin family. As to quaternary structure, oligomer (believed to be a pentamer but probably hexamer).

It localises to the secreted. Its subcellular location is the extracellular space. The protein resides in the apoplast. Functionally, may play a role in plant defense. Probably has no oxalate oxidase activity even if the active site is conserved. In Oryza sativa subsp. japonica (Rice), this protein is Putative germin-like protein 3-4.